The following is a 292-amino-acid chain: MKSTFSTVLITGSSKGLGYALVKVGLAQGYNVIACSRAPDTITIEHSKLLKLKLDVTDVKSVETAFKDAKRRFGNVDIVINNAGYGLVGEFESYNIEEMHRQMNVNFWGVAYITKEALNLMRESGKGGRILQISSVAGYYPSPCLSMYNASKFAVEGLSQTIMRELDPNWNIAITIVQPGGMQTEWASSNMQWAKPHPAYENDRSWRPFWENYHGCEETDPNKAAELLYSIAKLDRPPQKLVLGHDSLELIRKQHQDIGEELESNVALSTSVAKDDFDPASVETLRQNLQSM.

NADP(+) is bound by residues Leu17, Asp55, Asn82, and Lys115. Catalysis depends on Ser134, which acts as the Proton donor. The NADP(+) site is built by Tyr148, Lys152, and Thr184. The Proton acceptor role is filled by Tyr148. Lys152 serves as the catalytic Lowers pKa of active site Tyr.

Belongs to the short-chain dehydrogenases/reductases (SDR) family.

The protein resides in the cytoplasm. This is an uncharacterized protein from Schizosaccharomyces pombe (strain 972 / ATCC 24843) (Fission yeast).